The primary structure comprises 423 residues: Histidine--tRNA ligase (423 aa).

The protein belongs to the class-II aminoacyl-tRNA synthetase family. As to quaternary structure, homodimer.

It is found in the cytoplasm. The catalysed reaction is tRNA(His) + L-histidine + ATP = L-histidyl-tRNA(His) + AMP + diphosphate + H(+). This is Histidine--tRNA ligase from Prochlorococcus marinus (strain MIT 9211).